The sequence spans 217 residues: UPF0502 protein KPN78578_10500 (217 aa).

Belongs to the UPF0502 family.

The polypeptide is UPF0502 protein KPN78578_10500 (Klebsiella pneumoniae subsp. pneumoniae (strain ATCC 700721 / MGH 78578)).